We begin with the raw amino-acid sequence, 147 residues long: Large ribosomal subunit protein mL40 (147 aa).

The N-terminal 26 residues, 1-26, are a transit peptide targeting the mitochondrion; that stretch reads MLAQTFKKPHRAVLEQVSGTTVFIRN.

This sequence belongs to the mitochondrion-specific ribosomal protein mL40 family. Component of the mitochondrial large ribosomal subunit (mt-LSU). Mature yeast 74S mitochondrial ribosomes consist of a small (37S) and a large (54S) subunit. The 37S small subunit contains a 15S ribosomal RNA (15S mt-rRNA) and 34 different proteins. The 54S large subunit contains a 21S rRNA (21S mt-rRNA) and 46 different proteins.

It localises to the mitochondrion. In terms of biological role, component of the mitochondrial ribosome (mitoribosome), a dedicated translation machinery responsible for the synthesis of mitochondrial genome-encoded proteins, including at least some of the essential transmembrane subunits of the mitochondrial respiratory chain. The mitoribosomes are attached to the mitochondrial inner membrane and translation products are cotranslationally integrated into the membrane. This Saccharomyces cerevisiae (strain ATCC 204508 / S288c) (Baker's yeast) protein is Large ribosomal subunit protein mL40 (MRPL28).